The chain runs to 96 residues: Mitochondrial import inner membrane translocase subunit Tim13-B (96 aa).

Positions 47 to 70 match the Twin CX3C motif motif; the sequence is CFRKCIGKPGGSLDNSEQKCVAMC. Disulfide bonds link Cys47-Cys70 and Cys51-Cys66.

Belongs to the small Tim family. As to quaternary structure, heterohexamer; composed of 3 copies of TIMM8 (TIMM8A or TIMM8B) and 3 copies of TIMM13, named soluble 70 kDa complex. Associates with the TIM22 complex, whose core is composed of TIMM22.

The protein resides in the mitochondrion inner membrane. Functionally, mitochondrial intermembrane chaperone that participates in the import and insertion of some multi-pass transmembrane proteins into the mitochondrial inner membrane. Also required for the transfer of beta-barrel precursors from the TOM complex to the sorting and assembly machinery (SAM complex) of the outer membrane. Acts as a chaperone-like protein that protects the hydrophobic precursors from aggregation and guide them through the mitochondrial intermembrane space. The TIMM8-TIMM13 complex mediates the import of some proteins while the predominant TIMM9-TIMM10 70 kDa complex mediates the import of much more proteins. This Xenopus laevis (African clawed frog) protein is Mitochondrial import inner membrane translocase subunit Tim13-B (timm13-b).